Here is a 360-residue protein sequence, read N- to C-terminus: Glutamate 5-kinase (360 aa).

Lys-7 serves as a coordination point for ATP. The substrate site is built by Ser-47, Asp-134, and Asn-146. ATP contacts are provided by residues 166-167 (TD) and 210-216 (TGGISTK). Positions 275-356 (VGKITLDDGA…SSIIVVHRDV (82 aa)) constitute a PUA domain.

This sequence belongs to the glutamate 5-kinase family.

It is found in the cytoplasm. It carries out the reaction L-glutamate + ATP = L-glutamyl 5-phosphate + ADP. It functions in the pathway amino-acid biosynthesis; L-proline biosynthesis; L-glutamate 5-semialdehyde from L-glutamate: step 1/2. In terms of biological role, catalyzes the transfer of a phosphate group to glutamate to form L-glutamate 5-phosphate. This is Glutamate 5-kinase from Prochlorococcus marinus (strain MIT 9301).